The sequence spans 389 residues: Phospho-N-acetylmuramoyl-pentapeptide-transferase (389 aa).

The next 10 membrane-spanning stretches (helical) occupy residues 25–45, 73–93, 97–117, 135–155, 190–210, 222–242, 258–278, 286–306, 311–331, and 366–386; these read RAVM…PWVI, TMGG…WGDL, FIWI…VDDY, FWQS…VSEA, ISYP…IVGA, GLVI…AYVM, GAGE…AFLW, VFMG…VAVI, IVLF…MLQV, and QVVV…LSTL.

It belongs to the glycosyltransferase 4 family. MraY subfamily. Requires Mg(2+) as cofactor.

It is found in the cell inner membrane. The catalysed reaction is UDP-N-acetyl-alpha-D-muramoyl-L-alanyl-gamma-D-glutamyl-meso-2,6-diaminopimeloyl-D-alanyl-D-alanine + di-trans,octa-cis-undecaprenyl phosphate = di-trans,octa-cis-undecaprenyl diphospho-N-acetyl-alpha-D-muramoyl-L-alanyl-D-glutamyl-meso-2,6-diaminopimeloyl-D-alanyl-D-alanine + UMP. Its pathway is cell wall biogenesis; peptidoglycan biosynthesis. Its function is as follows. Catalyzes the initial step of the lipid cycle reactions in the biosynthesis of the cell wall peptidoglycan: transfers peptidoglycan precursor phospho-MurNAc-pentapeptide from UDP-MurNAc-pentapeptide onto the lipid carrier undecaprenyl phosphate, yielding undecaprenyl-pyrophosphoryl-MurNAc-pentapeptide, known as lipid I. The chain is Phospho-N-acetylmuramoyl-pentapeptide-transferase from Burkholderia multivorans (strain ATCC 17616 / 249).